The following is a 582-amino-acid chain: MITRMSQLFLRTLRDDPADAEVPSHKLLIRAGYIRPVAPGLYSWLPLGLRVLRRIEHIVREEMNAIGGQEILFPALLPRAPYEATNRWTEYGDSVFRLQDRRGNDYLLGPTHEELFTLTVKGEYSSYKDFPVLLYQIQNKYRDEARPRAGILRVREFVMKDSYSFDIDDAGLKAAYHAHREAYQRIFARLQVRYVIVSAVSGAMGGSASEEFLAESPVGEDTFVRCLESGYAANVEAVITARPDPQPVEGLPEAVVHDTGDTPTIATLVDWANRAGLGRAVTAADTLKNVLLKVRQPGGDWELLAIGLPGDREVDDKRLGAALEPAEYVLLDDADFARYPFLVKGYIGPKALKDNGVRYLVDPRVVDGTSWITGADEPGRHVVGLVAGRDFTADGTIEAAEVRDGDPSPDGAGPLVSARGIEVAHIFQLGRKYTDAFTADVLGEDGKPVRLTMGSYGLGVSRMVAVIAEQHHDELGLRWPASVAPFDVHLVIANKDAQARAGATALADDLDRLGVEVLLDDRQASPGVKFKDAELLGVPWIVVVGRGWADGVVELRDRFAGQTRELATGPSLAADIAAALRG.

Belongs to the class-II aminoacyl-tRNA synthetase family. ProS type 1 subfamily. As to quaternary structure, homodimer.

Its subcellular location is the cytoplasm. It carries out the reaction tRNA(Pro) + L-proline + ATP = L-prolyl-tRNA(Pro) + AMP + diphosphate. Functionally, catalyzes the attachment of proline to tRNA(Pro) in a two-step reaction: proline is first activated by ATP to form Pro-AMP and then transferred to the acceptor end of tRNA(Pro). As ProRS can inadvertently accommodate and process non-cognate amino acids such as alanine and cysteine, to avoid such errors it has two additional distinct editing activities against alanine. One activity is designated as 'pretransfer' editing and involves the tRNA(Pro)-independent hydrolysis of activated Ala-AMP. The other activity is designated 'posttransfer' editing and involves deacylation of mischarged Ala-tRNA(Pro). The misacylated Cys-tRNA(Pro) is not edited by ProRS. This Mycolicibacterium paratuberculosis (strain ATCC BAA-968 / K-10) (Mycobacterium paratuberculosis) protein is Proline--tRNA ligase.